The chain runs to 50 residues: Photosystem II reaction center protein K (50 aa).

A propeptide spanning residues Met-1–Gly-13 is cleaved from the precursor. Residues Ile-25–Ala-45 form a helical membrane-spanning segment.

Belongs to the PsbK family. In terms of assembly, PSII is composed of 1 copy each of membrane proteins PsbA, PsbB, PsbC, PsbD, PsbE, PsbF, PsbH, PsbI, PsbJ, PsbK, PsbL, PsbM, PsbT, PsbY, PsbZ, Psb30/Ycf12, at least 3 peripheral proteins of the oxygen-evolving complex and a large number of cofactors. It forms dimeric complexes.

The protein resides in the plastid. It localises to the chloroplast thylakoid membrane. Functionally, one of the components of the core complex of photosystem II (PSII). PSII is a light-driven water:plastoquinone oxidoreductase that uses light energy to abstract electrons from H(2)O, generating O(2) and a proton gradient subsequently used for ATP formation. It consists of a core antenna complex that captures photons, and an electron transfer chain that converts photonic excitation into a charge separation. In Euglena myxocylindracea, this protein is Photosystem II reaction center protein K.